A 401-amino-acid chain; its full sequence is Probable trafficking protein particle complex subunit 13 homolog (401 aa).

Belongs to the TRAPPC13 family.

This Caenorhabditis briggsae protein is Probable trafficking protein particle complex subunit 13 homolog.